Reading from the N-terminus, the 160-residue chain is 17.9 kDa class II heat shock protein (160 aa).

The sHSP domain occupies 44–160; it reads DARAMAATPA…KPKTIQVQVA (117 aa).

This sequence belongs to the small heat shock protein (HSP20) family.

It localises to the cytoplasm. This chain is 17.9 kDa class II heat shock protein (HSP17.9), found in Helianthus annuus (Common sunflower).